The sequence spans 223 residues: Ribonuclease T (223 aa).

Positions 20–195 (VVIDVETAGF…YDTERTAELF (176 aa)) constitute an Exonuclease domain. Mg(2+) contacts are provided by Asp23, Glu25, His182, and Asp187. His182 serves as the catalytic Proton donor/acceptor.

This sequence belongs to the RNase T family. Homodimer. It depends on Mg(2+) as a cofactor.

In terms of biological role, trims short 3' overhangs of a variety of RNA species, leaving a one or two nucleotide 3' overhang. Responsible for the end-turnover of tRNA: specifically removes the terminal AMP residue from uncharged tRNA (tRNA-C-C-A). Also appears to be involved in tRNA biosynthesis. The polypeptide is Ribonuclease T (Photobacterium profundum (strain SS9)).